A 40-amino-acid polypeptide reads, in one-letter code: Photosystem I reaction center subunit IX (40 aa).

A helical transmembrane segment spans residues 12-34 (APVLLTAWMSLTAGMIIEIQRFF).

The protein belongs to the PsaJ family.

It localises to the plastid. The protein localises to the chloroplast thylakoid membrane. Functionally, may help in the organization of the PsaE and PsaF subunits. The sequence is that of Photosystem I reaction center subunit IX from Emiliania huxleyi (Coccolithophore).